The sequence spans 750 residues: Photosystem I P700 chlorophyll a apoprotein A1 (750 aa).

The next 8 membrane-spanning stretches (helical) occupy residues 70-93, 156-179, 195-219, 291-309, 346-369, 385-411, 433-455, and 531-549; these read VFSA…FHGA, LYCT…FHYH, LNHH…HVSL, TAHH…GHMY, WHAQ…HHMY, LSLF…IFMV, AIVS…LYIH, and FLVH…LILL. Cysteine 573 and cysteine 582 together coordinate [4Fe-4S] cluster. Transmembrane regions (helical) follow at residues 589–610 and 664–686; these read HVFL…HFSW and LSAY…MFLF. Histidine 675 is a chlorophyll a' binding site. Chlorophyll a is bound by residues methionine 683 and tyrosine 691. A phylloquinone-binding site is contributed by tryptophan 692. The helical transmembrane segment at 724 to 744 threads the bilayer; that stretch reads AVGVAHYLLGGIVTTWAFFLA.

This sequence belongs to the PsaA/PsaB family. As to quaternary structure, the PsaA/B heterodimer binds the P700 chlorophyll special pair and subsequent electron acceptors. PSI consists of a core antenna complex that captures photons, and an electron transfer chain that converts photonic excitation into a charge separation. The eukaryotic PSI reaction center is composed of at least 11 subunits. Requires P700 is a chlorophyll a/chlorophyll a' dimer, A0 is one or more chlorophyll a, A1 is one or both phylloquinones and FX is a shared 4Fe-4S iron-sulfur center. as cofactor.

The protein localises to the plastid. It is found in the chloroplast thylakoid membrane. It carries out the reaction reduced [plastocyanin] + hnu + oxidized [2Fe-2S]-[ferredoxin] = oxidized [plastocyanin] + reduced [2Fe-2S]-[ferredoxin]. PsaA and PsaB bind P700, the primary electron donor of photosystem I (PSI), as well as the electron acceptors A0, A1 and FX. PSI is a plastocyanin-ferredoxin oxidoreductase, converting photonic excitation into a charge separation, which transfers an electron from the donor P700 chlorophyll pair to the spectroscopically characterized acceptors A0, A1, FX, FA and FB in turn. Oxidized P700 is reduced on the lumenal side of the thylakoid membrane by plastocyanin. This chain is Photosystem I P700 chlorophyll a apoprotein A1, found in Pinus koraiensis (Korean pine).